Here is a 350-residue protein sequence, read N- to C-terminus: Salicylate decarboxylase (350 aa).

This sequence belongs to the metallo-dependent hydrolases superfamily. In terms of assembly, homotetramer.

The enzyme catalyses salicylate + H(+) = phenol + CO2. Its activity is regulated as follows. Inhibited by AgNO(3), HgCl(2), p-chloromercuribenzoic acid and NiCl(2). Functionally, reversibly catalyzes the regioselective carboxylation of phenol to form salicylic acid. Involved in a pathway for the degradation of salicylate via phenol. Also catalyzes the decarboxylation of beta-resorcylic acid (2,4-dihydroxybenzoic acid) into resorcinol (1,3-dihydroxybenzene), gamma-resorcylic acid (2,6-dihydroxybenzoic acid) into resorcinol, 2,3-dihydroxybenzoic acid into catechol (1,2-dihydroxybenzene), and 4-aminosalicylic acid into 3-aminophenol. This Cutaneotrichosporon moniliiforme (Yeast) protein is Salicylate decarboxylase.